The sequence spans 59 residues: Large ribosomal subunit protein bL32 (59 aa).

The protein belongs to the bacterial ribosomal protein bL32 family.

This Synechococcus sp. (strain RCC307) protein is Large ribosomal subunit protein bL32.